The following is a 106-amino-acid chain: uncharacterized protein (106 aa).

Residues 85–101 (AVALVLLCVSHHLTYLP) form a helical membrane-spanning segment.

It is found in the membrane. This is an uncharacterized protein from Saccharomyces cerevisiae (strain ATCC 204508 / S288c) (Baker's yeast).